We begin with the raw amino-acid sequence, 257 residues long: Acetylglutamate kinase (257 aa).

Residues 43-44 (GG), R65, and N157 each bind substrate. ATP-binding positions include 180-185 (DVSGIL) and 208-210 (IIT).

This sequence belongs to the acetylglutamate kinase family. ArgB subfamily. Homodimer.

It localises to the cytoplasm. It catalyses the reaction N-acetyl-L-glutamate + ATP = N-acetyl-L-glutamyl 5-phosphate + ADP. Its pathway is amino-acid biosynthesis; L-arginine biosynthesis; N(2)-acetyl-L-ornithine from L-glutamate: step 2/4. Catalyzes the ATP-dependent phosphorylation of N-acetyl-L-glutamate. The sequence is that of Acetylglutamate kinase from Salmonella agona (strain SL483).